A 217-amino-acid chain; its full sequence is Thiamine-phosphate synthase (217 aa).

Residues 45 to 49 (QFRQK) and Asn81 each bind 4-amino-2-methyl-5-(diphosphooxymethyl)pyrimidine. Asp82 and Asp101 together coordinate Mg(2+). Residue Ser120 coordinates 4-amino-2-methyl-5-(diphosphooxymethyl)pyrimidine. Position 147-149 (147-149 (TPS)) interacts with 2-[(2R,5Z)-2-carboxy-4-methylthiazol-5(2H)-ylidene]ethyl phosphate. Lys150 serves as a coordination point for 4-amino-2-methyl-5-(diphosphooxymethyl)pyrimidine. Residues Gly179 and 197–198 (IS) contribute to the 2-[(2R,5Z)-2-carboxy-4-methylthiazol-5(2H)-ylidene]ethyl phosphate site.

This sequence belongs to the thiamine-phosphate synthase family. Mg(2+) serves as cofactor.

It carries out the reaction 2-[(2R,5Z)-2-carboxy-4-methylthiazol-5(2H)-ylidene]ethyl phosphate + 4-amino-2-methyl-5-(diphosphooxymethyl)pyrimidine + 2 H(+) = thiamine phosphate + CO2 + diphosphate. The catalysed reaction is 2-(2-carboxy-4-methylthiazol-5-yl)ethyl phosphate + 4-amino-2-methyl-5-(diphosphooxymethyl)pyrimidine + 2 H(+) = thiamine phosphate + CO2 + diphosphate. The enzyme catalyses 4-methyl-5-(2-phosphooxyethyl)-thiazole + 4-amino-2-methyl-5-(diphosphooxymethyl)pyrimidine + H(+) = thiamine phosphate + diphosphate. The protein operates within cofactor biosynthesis; thiamine diphosphate biosynthesis; thiamine phosphate from 4-amino-2-methyl-5-diphosphomethylpyrimidine and 4-methyl-5-(2-phosphoethyl)-thiazole: step 1/1. Its function is as follows. Condenses 4-methyl-5-(beta-hydroxyethyl)thiazole monophosphate (THZ-P) and 2-methyl-4-amino-5-hydroxymethyl pyrimidine pyrophosphate (HMP-PP) to form thiamine monophosphate (TMP). The protein is Thiamine-phosphate synthase of Helicobacter pylori (strain J99 / ATCC 700824) (Campylobacter pylori J99).